The primary structure comprises 123 residues: Protein HesB, vegetative (123 aa).

It belongs to the HesB/IscA family.

Functionally, may be required for efficient nitrogen fixation. The sequence is that of Protein HesB, vegetative (hesB2) from Trichormus variabilis (strain ATCC 29413 / PCC 7937) (Anabaena variabilis).